Reading from the N-terminus, the 953-residue chain is 26S proteasome non-ATPase regulatory subunit 1 (953 aa).

The residue at position 1 (M1) is an N-acetylmethionine. A Phosphothreonine modification is found at T273. The interval S277–K319 is disordered. A Phosphoserine modification is found at S290. The span at S290–T303 shows a compositional bias: basic and acidic residues. At K310 the chain carries N6-acetyllysine. T311 bears the Phosphothreonine mark. S315 carries the phosphoserine modification. PC repeat units follow at residues T403 to A436, G441 to R474, G476 to E510, A511 to L545, G547 to R580, S581 to R616, A617 to R649, G651 to Q685, G686 to A726, and G729 to V761. At K720 the chain carries N6-acetyllysine. Position 830 is a phosphothreonine (T830). S834 carries the post-translational modification Phosphoserine. 2 disordered regions span residues A839–P881 and A930–D953. 2 stretches are compositionally biased toward basic and acidic residues: residues K842–E852 and A859–E872. The span at E936 to D953 shows a compositional bias: acidic residues.

It belongs to the proteasome subunit S1 family. Component of the 19S proteasome regulatory particle complex. The 26S proteasome consists of a 20S core particle (CP) and two 19S regulatory subunits (RP). The regulatory particle is made of a lid composed of 9 subunits, a base containing 6 ATPases and few additional components including PSMD1. Interacts with ADRM1. Interacts with ZFAND1.

Its function is as follows. Component of the 26S proteasome, a multiprotein complex involved in the ATP-dependent degradation of ubiquitinated proteins. This complex plays a key role in the maintenance of protein homeostasis by removing misfolded or damaged proteins, which could impair cellular functions, and by removing proteins whose functions are no longer required. Therefore, the proteasome participates in numerous cellular processes, including cell cycle progression, apoptosis, or DNA damage repair. The chain is 26S proteasome non-ATPase regulatory subunit 1 (Psmd1) from Mus musculus (Mouse).